Reading from the N-terminus, the 416-residue chain is Muscle-specific homeobox protein tinman (416 aa).

2 stretches are compositionally biased toward polar residues: residues M1 to S11 and Y18 to L33. Disordered stretches follow at residues M1–L33, T246–R305, and V391–M416. Residues N281–S295 show a composition bias toward low complexity. Positions K301 to D360 form a DNA-binding region, homeobox. The span at M397–M416 shows a compositional bias: low complexity.

The protein localises to the nucleus. Its function is as follows. Required for the development of heart and visceral muscle; for the formation of somatic muscles. Has a crucial function in the early mesodermal subdivisions. The protein is Muscle-specific homeobox protein tinman (tin) of Drosophila melanogaster (Fruit fly).